The following is a 135-amino-acid chain: Large ribosomal subunit protein uL16c (135 aa).

The protein belongs to the universal ribosomal protein uL16 family. As to quaternary structure, part of the 50S ribosomal subunit.

It localises to the plastid. The protein resides in the chloroplast. The protein is Large ribosomal subunit protein uL16c of Nymphaea alba (White water-lily).